A 225-amino-acid polypeptide reads, in one-letter code: 3-demethoxyubiquinol 3-hydroxylase (225 aa).

Positions 1-11 (MSVASTSSGFT) are enriched in polar residues. Residues 1-20 (MSVASTSSGFTPFSRRRGPL) are disordered. Fe cation is bound by residues glutamate 74, glutamate 104, histidine 107, glutamate 156, glutamate 188, and histidine 191. Positions 181 to 203 (VSQMKDDEAQHRASAERAGGVPL) are disordered. The segment covering 184 to 195 (MKDDEAQHRASA) has biased composition (basic and acidic residues).

This sequence belongs to the COQ7 family. Fe cation is required as a cofactor.

Its subcellular location is the cell membrane. It carries out the reaction a 5-methoxy-2-methyl-3-(all-trans-polyprenyl)benzene-1,4-diol + AH2 + O2 = a 3-demethylubiquinol + A + H2O. The protein operates within cofactor biosynthesis; ubiquinone biosynthesis. In terms of biological role, catalyzes the hydroxylation of 2-nonaprenyl-3-methyl-6-methoxy-1,4-benzoquinol during ubiquinone biosynthesis. The chain is 3-demethoxyubiquinol 3-hydroxylase from Bordetella petrii (strain ATCC BAA-461 / DSM 12804 / CCUG 43448).